A 138-amino-acid chain; its full sequence is Ribosome-binding factor A (138 aa).

The interval 117–138 (ERQNKPAASTEKPPVGSLDADL) is disordered.

It belongs to the RbfA family. As to quaternary structure, monomer. Binds 30S ribosomal subunits, but not 50S ribosomal subunits or 70S ribosomes.

The protein resides in the cytoplasm. In terms of biological role, one of several proteins that assist in the late maturation steps of the functional core of the 30S ribosomal subunit. Associates with free 30S ribosomal subunits (but not with 30S subunits that are part of 70S ribosomes or polysomes). Required for efficient processing of 16S rRNA. May interact with the 5'-terminal helix region of 16S rRNA. The polypeptide is Ribosome-binding factor A (Acaryochloris marina (strain MBIC 11017)).